The primary structure comprises 420 residues: WD repeat-containing protein 21 (420 aa).

The DDB-boX motif lies at 73 to 75; the sequence is RQF. WD repeat units follow at residues 251 to 289, 293 to 332, and 341 to 383; these read QSKGDVFSLKYLGDNLVIAGCRNKSVLVYDLRTKKECVQ, HGSSICSMQNLDFSQPKLLVSGLESKISLYDCRFLQSKKR, and GHSN…PFKE.

The protein resides in the cytoplasm. It localises to the nucleus. This Schizosaccharomyces pombe (strain 972 / ATCC 24843) (Fission yeast) protein is WD repeat-containing protein 21 (wdr21).